The primary structure comprises 106 residues: Ferredoxin (106 aa).

Positions 9 and 17 each coordinate [3Fe-4S] cluster. [4Fe-4S] cluster is bound by residues Cys-21, Cys-40, Cys-43, and Cys-46. In terms of domain architecture, 4Fe-4S ferredoxin-type spans 31 to 60; sequence RMLYIHPDECVDCGACEPVCPVEAIYYEDD. Cys-50 is a [3Fe-4S] cluster binding site. The interval 84-106 is disordered; that stretch reads GAAKVGKVDRDVEPVSSLPPQGE.

[4Fe-4S] cluster is required as a cofactor. It depends on [3Fe-4S] cluster as a cofactor.

Ferredoxins are iron-sulfur proteins that transfer electrons in a wide variety of metabolic reactions. This is Ferredoxin (fdxA) from Saccharopolyspora erythraea (Streptomyces erythraeus).